Here is a 66-residue protein sequence, read N- to C-terminus: Potassium channel toxin alpha-KTx 27.3 (66 aa).

Positions 1–17 (MKLMWLLFLCVLAFSIA) are cleaved as a signal peptide.

It belongs to the short scorpion toxin superfamily. Potassium channel inhibitor family. Alpha-KTx 27 subfamily. Contains 4 disulfide bonds. As to expression, expressed by the venom gland.

The protein resides in the secreted. This Lychas mucronatus (Chinese swimming scorpion) protein is Potassium channel toxin alpha-KTx 27.3.